We begin with the raw amino-acid sequence, 370 residues long: Cytochrome b (370 aa).

Helical transmembrane passes span 30–50, 74–96, 109–129, and 175–195; these read FGSM…FLAF, WIFR…LHIF, VWMS…MGYV, and FFVL…GHLI. His-80 and His-94 together coordinate heme b. Heme b-binding residues include His-179 and His-193. His-198 is a binding site for a ubiquinone. 4 consecutive transmembrane segments (helical) span residues 221–240, 284–304, 316–336, and 342–362; these read YIGK…VLSL, VLGV…ALVN, FLVF…QCMV, and VLSP…LGIF.

The protein belongs to the cytochrome b family. The main subunits of complex b-c1 are: cytochrome b, cytochrome c1 and the Rieske protein. Heme b is required as a cofactor.

It is found in the mitochondrion inner membrane. In terms of biological role, component of the ubiquinol-cytochrome c reductase complex (complex III or cytochrome b-c1 complex) that is part of the mitochondrial respiratory chain. The b-c1 complex mediates electron transfer from ubiquinol to cytochrome c. Contributes to the generation of a proton gradient across the mitochondrial membrane that is then used for ATP synthesis. The chain is Cytochrome b (ctb-1) from Caenorhabditis briggsae.